The following is a 280-amino-acid chain: MVAITTTLVKQLRDRTNAGLMKCKKALIEANGDIELAIDNLRKSGQITAANKSSRITAQGIILTKINHNSQYGVIIELNCETDFVAKDKIFKNFGEDIITTALNQKISSLEEIKSLFEEKRITLVDTVGENINIRRINTLEGNLIVSYLHDTRIGVLLSANNISQNLYLGKQIAMHIAAMKPKYIQVNDIPSYIISREHKIQLNIAMQSNKPQKVIQQIVEGRMREFTRDISLLDQNFIIDPSQKVGQILEHYNIIVKNFIRFEVGEWIEQEEHYKANES.

Residues 82–85 (TDFV) form an involved in Mg(2+) ion dislocation from EF-Tu region.

This sequence belongs to the EF-Ts family.

It is found in the cytoplasm. In terms of biological role, associates with the EF-Tu.GDP complex and induces the exchange of GDP to GTP. It remains bound to the aminoacyl-tRNA.EF-Tu.GTP complex up to the GTP hydrolysis stage on the ribosome. This Baumannia cicadellinicola subsp. Homalodisca coagulata protein is Elongation factor Ts.